The chain runs to 1851 residues: Protein lap4 (1851 aa).

LRR repeat units lie at residues 38–59 (TLEELFLDANHIRDLPKNFFRL), 61–82 (RLRKLGLSDNEIGRLPPDIQNF), 84–105 (NLVELDVSRNDIPDIPDDIKHL), 107–128 (SLQVADFSSNPIPKLPSGFSQL), 130–152 (NLTVLGLNDMSLTTLPADFGSLT), 153–174 (QLESLELRENLLKHLPETISQL), 176–197 (KLKRLDLGDNEIEDLPPYLGYL), 199–220 (GLHELWLDHNQLQRLPPELGLL), 222–243 (KLTYLDVSENRLEELPNEISGL), 245–267 (SLTDLDLAQNLLEALPDGIAKLS), 268–289 (RLTILKLDQNRLQRLNDTLGNC), 291–312 (NMQELILTENFLSELPASIGQM), 314–335 (KLNNLNVDRNALEYLPLEIGQC), 337–358 (NLGVLSLRDNKLKKLPPELGNC), 360–382 (VLHVLDVSGNQLLYLPYSLVNLQ), and 383–403 (LKAVWLSENQSQPLLTFQPDT). 3 disordered regions span residues 427–474 (PARD…KDLK), 584–641 (VGGS…VQHL), and 656–719 (SQER…PDNL). Phosphoserine is present on residues Ser-433 and Ser-435. Residues 438–461 (FEEREPSRTVVKFSEEATQEKETP) show a composition bias toward basic and acidic residues. Residues 471-492 (KDLKAKAQKLKVERSRNEEHAN) adopt a coiled-coil conformation. Over residues 589 to 601 (EVQDDDEQEDEFE) the composition is skewed to acidic residues. A compositionally biased stretch (basic residues) spans 620-639 (RPPKLHRRDTPHHLKNKRVQ). Residues 656 to 672 (SQERNDTTPQHSLSGKV) are compositionally biased toward polar residues. Positions 676–686 (IEEEEQLEVEQ) are enriched in acidic residues. Residues 677 to 693 (EEEEQLEVEQEQQQQQQ) are a coiled coil. Residues Ser-700, Ser-702, and Ser-705 each carry the phosphoserine modification. The 88-residue stretch at 731-818 (EIHIERTAAG…VLVLVVQREV (88 aa)) folds into the PDZ 1 domain. 2 positions are modified to phosphoserine: Ser-834 and Ser-837. The PDZ 2 domain maps to 929–1019 (HTTLIRDQIG…FVRLVLQREY (91 aa)). 2 positions are modified to phosphoserine: Ser-1031 and Ser-1041. Residues 1067-1150 (LATTTPTPKP…EAQPSSLRPL (84 aa)) form a disordered region. 2 stretches are compositionally biased toward polar residues: residues 1080–1097 (ASISNNNNTLPSSKTNGF) and 1132–1149 (GSTTSGDSGEAQPSSLRP). PDZ domains follow at residues 1239–1329 (EVVL…QHDP) and 1336–1428 (EVLL…CKGY). A compositionally biased stretch (polar residues) spans 1448–1467 (NSSASCSGGSRQGSRASETG). The segment at 1448–1485 (NSSASCSGGSRQGSRASETGSELSQSQSVSSLDHEEDE) is disordered. Low complexity predominate over residues 1468–1478 (SELSQSQSVSS). Phosphoserine is present on residues Ser-1475, Ser-1477, and Ser-1478. Thr-1599 is modified (phosphothreonine). Over residues 1647 to 1669 (AESANSAGAPSPAVPASTPGSAP) the composition is skewed to low complexity. 2 disordered regions span residues 1647 to 1751 (AESA…KVFS) and 1772 to 1851 (LRRD…VFRS). The segment covering 1725-1751 (VSDKKRFFESAMEDQHKPTQKTDKVFS) has biased composition (basic and acidic residues). Residues 1753–1790 (LSKDEVEKLRQEEERKIATLRRDKNSRLLDAANDNIDK) are a coiled coil. The segment covering 1807–1816 (DDNDDSDQEE) has biased composition (acidic residues). A compositionally biased stretch (basic and acidic residues) spans 1831–1851 (HFDDAEDMRNPLDEIEAVFRS).

The protein belongs to the LAP (LRR and PDZ) protein family. As to expression, during germ band extension, expression of isoform A occurs predominantly in neuroblasts derived from the neuro-ectoderm and later is restricted to CNS neurons and pole cells. Isoform C is strongly expressed in PNS and a subset of CNS neurons. In the adult, expressed in third antennal segment and maxillary palps, major olfactory organs and in Johnstons organ in the second antennal segment. Expression is also observed in cortical regions of the brain. Isoforms expressed in epithelia are coexpressed with dlg1 throughout development.

The protein resides in the cytoplasm. It is found in the apicolateral cell membrane. It localises to the cell junction. Its subcellular location is the septate junction. Required for polarization of the embryonic, imaginal disk and follicular epithelia. Specifically restricts apical membrane determinants to the apical cell surface; acts to exclude crb from the basolateral domain and define adherens junction position. Regulates cellular growth and differentiation; acts as a tumor suppressor. Essential for odor guided behavior. This chain is Protein lap4, found in Drosophila melanogaster (Fruit fly).